The following is a 398-amino-acid chain: DJ-1 protein homolog E (398 aa).

2 PfpI endopeptidase domains span residues 7–199 and 210–393; these read KSAL…ESLG and ASVL…TALG.

The protein belongs to the peptidase C56 family. In terms of assembly, homotrimer. In terms of tissue distribution, expressed in roots and cauline leaves.

Its function is as follows. May be involved in oxidative stress response. The chain is DJ-1 protein homolog E (DJ1E) from Arabidopsis thaliana (Mouse-ear cress).